The sequence spans 160 residues: 6,7-dimethyl-8-ribityllumazine synthase (160 aa).

Residues Phe-22, 57-59 (AVE), and 81-83 (AVI) contribute to the 5-amino-6-(D-ribitylamino)uracil site. 86 to 87 (GT) provides a ligand contact to (2S)-2-hydroxy-3-oxobutyl phosphate. His-89 acts as the Proton donor in catalysis. Phe-114 provides a ligand contact to 5-amino-6-(D-ribitylamino)uracil. Arg-128 contacts (2S)-2-hydroxy-3-oxobutyl phosphate.

It belongs to the DMRL synthase family. In terms of assembly, forms an icosahedral capsid composed of 60 subunits, arranged as a dodecamer of pentamers.

The enzyme catalyses (2S)-2-hydroxy-3-oxobutyl phosphate + 5-amino-6-(D-ribitylamino)uracil = 6,7-dimethyl-8-(1-D-ribityl)lumazine + phosphate + 2 H2O + H(+). It participates in cofactor biosynthesis; riboflavin biosynthesis; riboflavin from 2-hydroxy-3-oxobutyl phosphate and 5-amino-6-(D-ribitylamino)uracil: step 1/2. Functionally, catalyzes the formation of 6,7-dimethyl-8-ribityllumazine by condensation of 5-amino-6-(D-ribitylamino)uracil with 3,4-dihydroxy-2-butanone 4-phosphate. This is the penultimate step in the biosynthesis of riboflavin. The chain is 6,7-dimethyl-8-ribityllumazine synthase from Shewanella sediminis (strain HAW-EB3).